The chain runs to 339 residues: Erlin-2 (339 aa).

Topologically, residues 1–3 (MAQ) are cytoplasmic. Residues 4–24 (LGAVVAVASSFFCASLFSAVH) traverse the membrane as a helical segment. Residues 25-339 (KIEEGHIGVY…EPLETATKEN (315 aa)) lie on the Lumenal side of the membrane. N-linked (GlcNAc...) asparagine glycosylation is present at N106. Residues 177-309 (EAIRRNYELM…DIPNMFMDSA (133 aa)) are interaction with ERLIN1. An N6-acetyllysine modification is found at K267.

The protein belongs to the band 7/mec-2 family. As to quaternary structure, forms a heteromeric complex with ERLIN1. In complex with ERLIN1, interacts with RNF170. Interacts with activated ITPR1, independently of the degree of ITPR1 polyubiquitination. Interacts with SCAP, INSIG1, SREBF1 and SREBF2 under cholesterol sufficiency conditions; indicative for an association with the SCAP-SREBP-INSIG complex. Probably part of an AMFR/gp78 and INSIG1-containing ubiquitin ligase complex involved in ERAD of HMGCR. Interacts with TMUB1; TMUB1 bridges the association with AMFR. Interacts with SYVN1 and RNF139. Interacts with TMEM259. Interacts with TMEM41B. Post-translationally, deubiquitinated by USP25; leading to stabilization. In terms of tissue distribution, ubiquitous.

The protein localises to the endoplasmic reticulum membrane. In terms of biological role, component of the ERLIN1/ERLIN2 complex which mediates the endoplasmic reticulum-associated degradation (ERAD) of inositol 1,4,5-trisphosphate receptors (IP3Rs) such as ITPR1. Promotes sterol-accelerated ERAD of HMGCR probably implicating an AMFR/gp78-containing ubiquitin ligase complex. Involved in regulation of cellular cholesterol homeostasis by regulation the SREBP signaling pathway. May promote ER retention of the SCAP-SREBF complex. The sequence is that of Erlin-2 (ERLIN2) from Homo sapiens (Human).